The primary structure comprises 110 residues: UPF0122 protein lin1916 (110 aa).

It belongs to the UPF0122 family.

Functionally, might take part in the signal recognition particle (SRP) pathway. This is inferred from the conservation of its genetic proximity to ftsY/ffh. May be a regulatory protein. This is UPF0122 protein lin1916 from Listeria innocua serovar 6a (strain ATCC BAA-680 / CLIP 11262).